The following is a 108-amino-acid chain: Thioredoxin (108 aa).

The region spanning 2-108 (SDAILYVSDD…QLTAFLDSQL (107 aa)) is the Thioredoxin domain. An intrachain disulfide couples Cys33 to Cys36.

The protein belongs to the thioredoxin family.

Component of the thioredoxin-thioredoxin reductase system. Participates in various redox reactions through the reversible oxidation of its active center dithiol to a disulfide and catalyzes dithiol-disulfide exchange reactions. The protein is Thioredoxin (trxA) of Acidithiobacillus ferridurans.